Here is a 137-residue protein sequence, read N- to C-terminus: Large ribosomal subunit protein bL17 (137 aa).

Belongs to the bacterial ribosomal protein bL17 family. In terms of assembly, part of the 50S ribosomal subunit. Contacts protein L32.

The protein is Large ribosomal subunit protein bL17 of Bradyrhizobium sp. (strain ORS 278).